A 715-amino-acid polypeptide reads, in one-letter code: ATP-dependent zinc metalloprotease FtsH (715 aa).

Residues 1-10 (MKNKNRGFFR) are Cytoplasmic-facing. The helical transmembrane segment at 11–31 (SSLSYAFVILAVIFLIYSFFG) threads the bilayer. Topologically, residues 32–137 (RSDGSVKHLS…KPAASNFWGS (106 aa)) are extracellular. Residues 138–158 (MLTLILPTLIMFALLYWMLIG) form a helical membrane-spanning segment. The Cytoplasmic portion of the chain corresponds to 159-715 (SQRGQGGSGG…LLDAVNNKFD (557 aa)). The tract at residues 167–187 (GGPGGIMSFGRSKAKPADPKQ) is disordered. 233 to 240 (GPPGTGKT) serves as a coordination point for ATP. Residue His-455 coordinates Zn(2+). Residue Glu-456 is part of the active site. 2 residues coordinate Zn(2+): His-459 and Asp-531.

This sequence in the central section; belongs to the AAA ATPase family. It in the C-terminal section; belongs to the peptidase M41 family. Homohexamer. It depends on Zn(2+) as a cofactor.

Its subcellular location is the cell membrane. Functionally, acts as a processive, ATP-dependent zinc metallopeptidase for both cytoplasmic and membrane proteins. Plays a role in the quality control of integral membrane proteins. Its function is as follows. Can complement an E.coli ftsH disruption mutant. This chain is ATP-dependent zinc metalloprotease FtsH, found in Oenococcus oeni (Leuconostoc oenos).